We begin with the raw amino-acid sequence, 846 residues long: Protein arginine N-methyltransferase 9 (846 aa).

3 TPR repeats span residues 25-58 (VARSLQSAEHCLGDQDFGTAYAHYLLVLSLAPEL), 67-100 (QYTLFKWAEELHALSRIQDLLGCYEQALELFPDD), and 101-134 (EVICNSMGEHLFRMGFRDEAAGYFHKAVKLNPDF). SAM-dependent MTase PRMT-type domains follow at residues 137–466 (AKEN…YLRI) and 530–846 (NIPY…AVKP).

Belongs to the class I-like SAM-binding methyltransferase superfamily. Protein arginine N-methyltransferase family. In terms of assembly, found in a complex with PRMT9, SF3B2 and SF3B4. Interacts with SF3B2.

It localises to the cytoplasm. The enzyme catalyses L-arginyl-[protein] + 2 S-adenosyl-L-methionine = N(omega),N(omega)'-dimethyl-L-arginyl-[protein] + 2 S-adenosyl-L-homocysteine + 2 H(+). In terms of biological role, arginine methyltransferase that can both catalyze the formation of omega-N monomethylarginine (MMA) and symmetrical dimethylarginine (sDMA). Specifically mediates the symmetrical dimethylation of SF3B2. Involved in the regulation of alternative splicing of pre-mRNA. The sequence is that of Protein arginine N-methyltransferase 9 (Prmt9) from Mus musculus (Mouse).